We begin with the raw amino-acid sequence, 611 residues long: Dihydroxy-acid dehydratase (611 aa).

Mg(2+) is bound at residue Asp-81. Cys-122 lines the [2Fe-2S] cluster pocket. Mg(2+) contacts are provided by Asp-123 and Lys-124. Lys-124 carries the post-translational modification N6-carboxylysine. Position 195 (Cys-195) interacts with [2Fe-2S] cluster. Position 491 (Glu-491) interacts with Mg(2+). Ser-517 acts as the Proton acceptor in catalysis.

It belongs to the IlvD/Edd family. As to quaternary structure, homodimer. [2Fe-2S] cluster serves as cofactor. The cofactor is Mg(2+).

The enzyme catalyses (2R)-2,3-dihydroxy-3-methylbutanoate = 3-methyl-2-oxobutanoate + H2O. The catalysed reaction is (2R,3R)-2,3-dihydroxy-3-methylpentanoate = (S)-3-methyl-2-oxopentanoate + H2O. The protein operates within amino-acid biosynthesis; L-isoleucine biosynthesis; L-isoleucine from 2-oxobutanoate: step 3/4. It functions in the pathway amino-acid biosynthesis; L-valine biosynthesis; L-valine from pyruvate: step 3/4. Functionally, functions in the biosynthesis of branched-chain amino acids. Catalyzes the dehydration of (2R,3R)-2,3-dihydroxy-3-methylpentanoate (2,3-dihydroxy-3-methylvalerate) into 2-oxo-3-methylpentanoate (2-oxo-3-methylvalerate) and of (2R)-2,3-dihydroxy-3-methylbutanoate (2,3-dihydroxyisovalerate) into 2-oxo-3-methylbutanoate (2-oxoisovalerate), the penultimate precursor to L-isoleucine and L-valine, respectively. This Actinobacillus pleuropneumoniae serotype 5b (strain L20) protein is Dihydroxy-acid dehydratase.